The sequence spans 297 residues: MNYPSVSEQKHRVFIIYSAYLRVQFRESARLAVSVRNKNYNLVRADLHNILPQKNTTVFKDGTLAPLLIRLAWHSCATYDKYTRTGGSNGATMRYHLEASDEGNVGLEVARLSLEPIKRKHPWITYADLWILAGVVSIEACKGPSIKWRDGRVDYEDDLLVPPNGRLPLGGGDASHVRTIFSRMGFNDQETVALIGAHSLGRLHHHRSGFDGPWTSNPAKCDNEFYKLLLGNVWTLVDSPTGRKQYVNSTGQVMMPSDMSLIEDANFRFWVDQYAVSEELWRDHFALAFEKLTELGR.

The active-site Proton acceptor is the His-74. His-198 contributes to the heme b binding site. Trp-214 serves as the catalytic Tryptophan radical intermediate.

This sequence belongs to the peroxidase family. Cytochrome c peroxidase subfamily. Requires heme b as cofactor.

In terms of biological role, destroys radicals which are normally produced within the cells and which are toxic to biological systems. This Yarrowia lipolytica (strain CLIB 122 / E 150) (Yeast) protein is Putative heme-binding peroxidase.